We begin with the raw amino-acid sequence, 125 residues long: Small ribosomal subunit protein uS13 (125 aa).

The interval 97-125 (PVRGQKTRSNARTRKGPRPSRIKTKKKSS) is disordered. Basic residues predominate over residues 101–125 (QKTRSNARTRKGPRPSRIKTKKKSS).

This sequence belongs to the universal ribosomal protein uS13 family. Part of the 30S ribosomal subunit. Forms a loose heterodimer with protein S19. Forms two bridges to the 50S subunit in the 70S ribosome.

Functionally, located at the top of the head of the 30S subunit, it contacts several helices of the 16S rRNA. In the 70S ribosome it contacts the 23S rRNA (bridge B1a) and protein L5 of the 50S subunit (bridge B1b), connecting the 2 subunits; these bridges are implicated in subunit movement. Contacts the tRNAs in the A and P-sites. In Thermotoga maritima (strain ATCC 43589 / DSM 3109 / JCM 10099 / NBRC 100826 / MSB8), this protein is Small ribosomal subunit protein uS13.